A 198-amino-acid chain; its full sequence is Cytochrome c oxidase assembly protein CtaG (198 aa).

At 1 to 12 the chain is on the cytoplasmic side; that stretch reads MADNGQADRKER. A helical; Signal-anchor for type II membrane protein membrane pass occupies residues 13 to 35; the sequence is SNGVIVGTCLAFVAGMIGMAYAA. The Periplasmic segment spans residues 36-198; sequence VPLYDMFCRV…QVKAKAENKL (163 aa).

Belongs to the COX11/CtaG family.

The protein localises to the cell inner membrane. Exerts its effect at some terminal stage of cytochrome c oxidase synthesis, probably by being involved in the insertion of the copper B into subunit I. The chain is Cytochrome c oxidase assembly protein CtaG from Rhizobium meliloti (strain 1021) (Ensifer meliloti).